We begin with the raw amino-acid sequence, 358 residues long: 3-isopropylmalate dehydrogenase (358 aa).

77-90 (GPKWTNLPPDQQPE) lines the NAD(+) pocket. Substrate is bound by residues arginine 98, arginine 108, arginine 137, and aspartate 226. Residues aspartate 226, aspartate 250, and aspartate 254 each contribute to the Mg(2+) site. 284–296 (GSAPDIAGKGIAN) contributes to the NAD(+) binding site.

It belongs to the isocitrate and isopropylmalate dehydrogenases family. LeuB type 1 subfamily. Homodimer. It depends on Mg(2+) as a cofactor. The cofactor is Mn(2+).

The protein resides in the cytoplasm. The catalysed reaction is (2R,3S)-3-isopropylmalate + NAD(+) = 4-methyl-2-oxopentanoate + CO2 + NADH. It functions in the pathway amino-acid biosynthesis; L-leucine biosynthesis; L-leucine from 3-methyl-2-oxobutanoate: step 3/4. Its function is as follows. Catalyzes the oxidation of 3-carboxy-2-hydroxy-4-methylpentanoate (3-isopropylmalate) to 3-carboxy-4-methyl-2-oxopentanoate. The product decarboxylates to 4-methyl-2 oxopentanoate. This Haemophilus influenzae (strain ATCC 51907 / DSM 11121 / KW20 / Rd) protein is 3-isopropylmalate dehydrogenase (leuB).